Here is a 28-residue protein sequence, read N- to C-terminus: Turritoxin F21-2 (28 aa).

In terms of tissue distribution, expressed by the venom duct.

The protein resides in the secreted. Functionally, potent inhibitor of human alpha-3-beta-2 nAChRs (IC(50)=566.2 nM). Irreversibly inhibits the acetylcholine-induced response on human alpha-7/CHRNA7 (55% inhibition at 5.6 uM) and alpha-3-beta-2/CHRNA3-CHRNB2 (91% inhibition) nAChRs. The chain is Turritoxin F21-2 from Polystira nobilis (Sea snail).